Here is a 160-residue protein sequence, read N- to C-terminus: UPF0178 protein XC_1827 (160 aa).

Belongs to the UPF0178 family.

The protein is UPF0178 protein XC_1827 of Xanthomonas campestris pv. campestris (strain 8004).